We begin with the raw amino-acid sequence, 172 residues long: Translation initiation factor IF-3 (172 aa).

Belongs to the IF-3 family. Monomer.

Its subcellular location is the cytoplasm. In terms of biological role, IF-3 binds to the 30S ribosomal subunit and shifts the equilibrium between 70S ribosomes and their 50S and 30S subunits in favor of the free subunits, thus enhancing the availability of 30S subunits on which protein synthesis initiation begins. The chain is Translation initiation factor IF-3 from Campylobacter jejuni subsp. jejuni serotype O:6 (strain 81116 / NCTC 11828).